Here is a 118-residue protein sequence, read N- to C-terminus: Large ribosomal subunit protein bL20 (118 aa).

It belongs to the bacterial ribosomal protein bL20 family.

Binds directly to 23S ribosomal RNA and is necessary for the in vitro assembly process of the 50S ribosomal subunit. It is not involved in the protein synthesizing functions of that subunit. The polypeptide is Large ribosomal subunit protein bL20 (rplT) (Thermotoga maritima (strain ATCC 43589 / DSM 3109 / JCM 10099 / NBRC 100826 / MSB8)).